A 435-amino-acid chain; its full sequence is MSAKSNKIGVVQLTILTMVNMMGSGIIMLPTKLAEIGTISIVSWLVTAVGSTALAYAFAQCGMFSKKSGGMGGYAEYSFGKAGNFMANYTYGVSLVIANTAIAISAVGYGSELFGTILSPLSIALWTIFTLWLATVLNFGGARITGNISSFTIWGVIIPVVGISIIGWKWFDGSMYVNSWNPHNVPTFEAIGVSISMTLWAFLGLESACANADAVENPEKNVPIAVLGGTLGAAVIYIVSTNVIAGIVPNLELANSTAPFGLAFAHMFDETVGKVIMGLMVMSCFGSLLGWQFTIAQVFKSSAEEGYFPAFFKKITSKDAPVVGMITITALQTLLSLMTISPSLNKQFNVLVDLAVVTNVIPYLLSMAALAVLLKAENVAPQKYKTTVFVAFIGSLYSIYALYAAGEQAMLYGSIVTFIGWTLYGFVSYKFDLKK.

12 helical membrane-spanning segments follow: residues 8–28 (IGVVQLTILTMVNMMGSGIIM), 39–59 (ISIVSWLVTAVGSTALAYAFA), 95–115 (LVIANTAIAISAVGYGSELFG), 117–137 (ILSPLSIALWTIFTLWLATVL), 148–168 (ISSFTIWGVIIPVVGISIIGW), 185–205 (VPTFEAIGVSISMTLWAFLGL), 224–244 (IAVLGGTLGAAVIYIVSTNVI), 275–295 (VIMGLMVMSCFGSLLGWQFTI), 320–340 (APVVGMITITALQTLLSLMTI), 354–374 (LAVVTNVIPYLLSMAALAVLL), 386–406 (TTVFVAFIGSLYSIYALYAAG), and 409–429 (AMLYGSIVTFIGWTLYGFVSY).

Belongs to the amino acid-polyamine-organocation (APC) superfamily. Basic amino acid/polyamine antiporter (APA) (TC 2.A.3.2) family.

Its subcellular location is the cell inner membrane. The catalysed reaction is putrescine(in) + H(+)(in) = putrescine(out) + H(+)(out). The enzyme catalyses putrescine(in) + L-ornithine(out) = putrescine(out) + L-ornithine(in). Its function is as follows. Catalyzes both the uptake and excretion of putrescine. The uptake of putrescine is dependent on the membrane potential and the excretion involves putrescine-ornithine antiporter activity. The protein is Putrescine transporter PotE of Haemophilus influenzae (strain ATCC 51907 / DSM 11121 / KW20 / Rd).